A 357-amino-acid polypeptide reads, in one-letter code: Probable leucine aminopeptidase TRV_02148.1 (357 aa).

The N-terminal stretch at M1–A15 is a signal peptide. N76 carries an N-linked (GlcNAc...) asparagine glycan. Zn(2+) contacts are provided by H167 and D185. Positions D169–S188 are disordered. N-linked (GlcNAc...) asparagine glycosylation is present at N186. Zn(2+) contacts are provided by E224 and D251. An N-linked (GlcNAc...) asparagine glycan is attached at N269. A disulfide bridge links C291 with C295. Residue H324 coordinates Zn(2+).

It belongs to the peptidase M28 family. M28E subfamily. Monomer. Requires Zn(2+) as cofactor.

The protein resides in the secreted. Probable extracellular aminopeptidase which contributes to pathogenicity. The sequence is that of Probable leucine aminopeptidase TRV_02148.1 from Trichophyton verrucosum (strain HKI 0517).